The primary structure comprises 179 residues: Interleukin-10 (179 aa).

Residues 1–19 (MPSPALLCCCLVLLAGVGA) form the signal peptide. 2 disulfides stabilise this stretch: Cys31–Cys127 and Cys81–Cys133. N-linked (GlcNAc...) asparagine glycosylation occurs at Asn135.

It belongs to the IL-10 family. Homodimer. Interacts with IL10RA and IL10RB.

It localises to the secreted. Major immune regulatory cytokine that acts on many cells of the immune system where it has profound anti-inflammatory functions, limiting excessive tissue disruption caused by inflammation. Mechanistically, IL10 binds to its heterotetrameric receptor comprising IL10RA and IL10RB leading to JAK1 and STAT2-mediated phosphorylation of STAT3. In turn, STAT3 translocates to the nucleus where it drives expression of anti-inflammatory mediators. Targets antigen-presenting cells (APCs) such as macrophages and monocytes and inhibits their release of pro-inflammatory cytokines including granulocyte-macrophage colony-stimulating factor /GM-CSF, granulocyte colony-stimulating factor/G-CSF, IL-1 alpha, IL-1 beta, IL-6, IL-8 and TNF-alpha. Also interferes with antigen presentation by reducing the expression of MHC-class II and co-stimulatory molecules, thereby inhibiting their ability to induce T cell activation. In addition, controls the inflammatory response of macrophages by reprogramming essential metabolic pathways including mTOR signaling. The protein is Interleukin-10 (IL10) of Vulpes vulpes (Red fox).